A 102-amino-acid chain; its full sequence is Urease subunit beta (102 aa).

The protein belongs to the urease beta subunit family. In terms of assembly, heterotrimer of UreA (gamma), UreB (beta) and UreC (alpha) subunits. Three heterotrimers associate to form the active enzyme.

Its subcellular location is the cytoplasm. It catalyses the reaction urea + 2 H2O + H(+) = hydrogencarbonate + 2 NH4(+). It functions in the pathway nitrogen metabolism; urea degradation; CO(2) and NH(3) from urea (urease route): step 1/1. The sequence is that of Urease subunit beta from Pseudomonas syringae pv. tomato (strain ATCC BAA-871 / DC3000).